A 386-amino-acid polypeptide reads, in one-letter code: Methionyl-tRNA formyltransferase, mitochondrial (386 aa).

This sequence belongs to the Fmt family.

It localises to the mitochondrion. It catalyses the reaction L-methionyl-tRNA(fMet) + (6R)-10-formyltetrahydrofolate = N-formyl-L-methionyl-tRNA(fMet) + (6S)-5,6,7,8-tetrahydrofolate + H(+). Functionally, methionyl-tRNA formyltransferase that formylates methionyl-tRNA in mitochondria and is crucial for translation initiation. In Mus musculus (Mouse), this protein is Methionyl-tRNA formyltransferase, mitochondrial (Mtfmt).